Reading from the N-terminus, the 423-residue chain is Serine hydroxymethyltransferase 2 (423 aa).

Residues leucine 121 and 125–127 each bind (6S)-5,6,7,8-tetrahydrofolate; that span reads GHL. N6-(pyridoxal phosphate)lysine is present on lysine 230. Position 356-358 (356-358) interacts with (6S)-5,6,7,8-tetrahydrofolate; it reads SPF.

It belongs to the SHMT family. As to quaternary structure, homodimer. Requires pyridoxal 5'-phosphate as cofactor.

The protein localises to the cytoplasm. The enzyme catalyses (6R)-5,10-methylene-5,6,7,8-tetrahydrofolate + glycine + H2O = (6S)-5,6,7,8-tetrahydrofolate + L-serine. It functions in the pathway one-carbon metabolism; tetrahydrofolate interconversion. It participates in amino-acid biosynthesis; glycine biosynthesis; glycine from L-serine: step 1/1. Its function is as follows. Catalyzes the reversible interconversion of serine and glycine with tetrahydrofolate (THF) serving as the one-carbon carrier. This reaction serves as the major source of one-carbon groups required for the biosynthesis of purines, thymidylate, methionine, and other important biomolecules. Also exhibits THF-independent aldolase activity toward beta-hydroxyamino acids, producing glycine and aldehydes, via a retro-aldol mechanism. This chain is Serine hydroxymethyltransferase 2, found in Pectobacterium atrosepticum (strain SCRI 1043 / ATCC BAA-672) (Erwinia carotovora subsp. atroseptica).